The primary structure comprises 461 residues: Cysteine--tRNA ligase (461 aa).

Position 28 (Cys28) interacts with Zn(2+). The short motif at 30–40 is the 'HIGH' region element; sequence ITVYDLCHIGH. 3 residues coordinate Zn(2+): Cys209, His234, and Glu238. The short motif at 266 to 270 is the 'KMSKS' region element; it reads KMSKS. ATP is bound at residue Lys269.

The protein belongs to the class-I aminoacyl-tRNA synthetase family. As to quaternary structure, monomer. Requires Zn(2+) as cofactor.

The protein localises to the cytoplasm. The catalysed reaction is tRNA(Cys) + L-cysteine + ATP = L-cysteinyl-tRNA(Cys) + AMP + diphosphate. This is Cysteine--tRNA ligase from Shigella boydii serotype 18 (strain CDC 3083-94 / BS512).